The sequence spans 124 residues: Protein MGF 110-4L (124 aa).

Residues 1–28 (MLVIFLGILGLLANQVLGLPIQAGGHLC) form the signal peptide. N-linked (GlcNAc...) asparagine; by host glycosylation occurs at asparagine 64. The Prevents secretion from ER motif lies at 121 to 124 (KEDL).

Belongs to the asfivirus MGF 110 family.

It is found in the virion. It localises to the host endoplasmic reticulum-Golgi intermediate compartment. Causes the redistribution of lumenal ER protein to an enlarged ERGIC compartment. The protein is Protein MGF 110-4L of Ornithodoros (relapsing fever ticks).